The following is a 351-amino-acid chain: Glycerol-3-phosphate dehydrogenase 1-like protein (351 aa).

12-17 is an NAD(+) binding site; it reads GSGNWG. Residue Lys-122 participates in substrate binding. Ala-155 serves as a coordination point for NAD(+). Lys-206 acts as the Proton acceptor in catalysis. Arg-271, Lys-298, and Gln-300 together coordinate NAD(+). A substrate-binding site is contributed by 271-272; the sequence is RN.

This sequence belongs to the NAD-dependent glycerol-3-phosphate dehydrogenase family. Interacts with SCN5A.

The protein resides in the cytoplasm. It carries out the reaction sn-glycerol 3-phosphate + NAD(+) = dihydroxyacetone phosphate + NADH + H(+). Functionally, plays a role in regulating cardiac sodium current; decreased enzymatic activity with resulting increased levels of glycerol 3-phosphate activating the DPD1L-dependent SCN5A phosphorylation pathway, may ultimately lead to decreased sodium current; cardiac sodium current may also be reduced due to alterations of NAD(H) balance induced by DPD1L. The sequence is that of Glycerol-3-phosphate dehydrogenase 1-like protein (GPD1L) from Pongo abelii (Sumatran orangutan).